A 360-amino-acid polypeptide reads, in one-letter code: MNEIHQPLARRVWRSNVDEEMARMAECLKRFPLIAFDTEYPGIIFRTYFDSSSDECYRAMKGNVENTKLIQCGFTLFNAKGEIGGVWEINFSNFGDPSDTRNELSIEFLRRHGLDLQKIRDEGVDMFGYGFFPKLMTVFRSQKHVEFVTFQGAYDFAYFLSILNHGKLPETHGEFATEVVKVFGQVYDTKVMAGFCEGLGEHLGLSKLAQLLQITRVGRAHHAGSDSLMTALVFIKLKHVYEDSRFARGLIYGIGKSNLVAAPAPAPVPEPTLPLMCQQNVASYPVFHNGYVQNYEQPQLVSYDPSGAPWAFCNATGTYVQLTHLPASTFAYPSQTPSATVDYLGPVPNYYNNNACYVVE.

A divalent metal cation-binding residues include Asp-37, Glu-39, Asp-155, and Asp-226.

This sequence belongs to the CAF1 family. In terms of assembly, component of the CCR4-NOT complex, at least composed of CRR4 and CAF1 proteins. A divalent metal cation serves as cofactor.

It is found in the nucleus. It localises to the cytoplasm. It catalyses the reaction Exonucleolytic cleavage of poly(A) to 5'-AMP.. In terms of biological role, ubiquitous transcription factor required for a diverse set of processes. It is a component of the CCR4 complex involved in the control of gene expression. The protein is Probable CCR4-associated factor 1 homolog 1 (CAF1-1) of Arabidopsis thaliana (Mouse-ear cress).